The sequence spans 766 residues: 5-methyltetrahydropteroyltriglutamate--homocysteine methyltransferase (766 aa).

5-methyltetrahydropteroyltri-L-glutamate is bound by residues 16–19 and K119; that span reads RELK. L-homocysteine is bound by residues 440–442 and E493; that span reads IGS. L-methionine is bound by residues 440 to 442 and E493; that span reads IGS. 5-methyltetrahydropteroyltri-L-glutamate is bound by residues 524–525 and W570; that span reads RC. D608 provides a ligand contact to L-homocysteine. D608 is an L-methionine binding site. E614 lines the 5-methyltetrahydropteroyltri-L-glutamate pocket. Positions 650, 652, and 674 each coordinate Zn(2+). H703 functions as the Proton donor in the catalytic mechanism. A Zn(2+)-binding site is contributed by C735.

It belongs to the vitamin-B12 independent methionine synthase family. Zn(2+) serves as cofactor.

It carries out the reaction 5-methyltetrahydropteroyltri-L-glutamate + L-homocysteine = tetrahydropteroyltri-L-glutamate + L-methionine. It participates in amino-acid biosynthesis; L-methionine biosynthesis via de novo pathway; L-methionine from L-homocysteine (MetE route): step 1/1. Catalyzes the transfer of a methyl group from 5-methyltetrahydrofolate to homocysteine resulting in methionine formation. In Pseudomonas aeruginosa (strain UCBPP-PA14), this protein is 5-methyltetrahydropteroyltriglutamate--homocysteine methyltransferase.